We begin with the raw amino-acid sequence, 351 residues long: UDP-3-O-acylglucosamine N-acyltransferase (351 aa).

His240 (proton acceptor) is an active-site residue.

The protein belongs to the transferase hexapeptide repeat family. LpxD subfamily. Homotrimer.

The catalysed reaction is a UDP-3-O-[(3R)-3-hydroxyacyl]-alpha-D-glucosamine + a (3R)-hydroxyacyl-[ACP] = a UDP-2-N,3-O-bis[(3R)-3-hydroxyacyl]-alpha-D-glucosamine + holo-[ACP] + H(+). Its pathway is bacterial outer membrane biogenesis; LPS lipid A biosynthesis. Its function is as follows. Catalyzes the N-acylation of UDP-3-O-acylglucosamine using 3-hydroxyacyl-ACP as the acyl donor. Is involved in the biosynthesis of lipid A, a phosphorylated glycolipid that anchors the lipopolysaccharide to the outer membrane of the cell. The protein is UDP-3-O-acylglucosamine N-acyltransferase of Pseudomonas syringae pv. syringae (strain B728a).